Here is a 506-residue protein sequence, read N- to C-terminus: SPbeta prophage-derived uncharacterized protein YonE (506 aa).

The tract at residues 473–506 (YTFTGNEVGRPNEGNKNNDNTVKSATSNGNDNPI) is disordered. Positions 486–506 (GNKNNDNTVKSATSNGNDNPI) are enriched in polar residues.

The protein is SPbeta prophage-derived uncharacterized protein YonE (yonE) of Bacillus subtilis (strain 168).